The chain runs to 89 residues: Small ribosomal subunit protein uS14 (89 aa).

It belongs to the universal ribosomal protein uS14 family. As to quaternary structure, part of the 30S ribosomal subunit. Contacts proteins S3 and S10.

Functionally, binds 16S rRNA, required for the assembly of 30S particles and may also be responsible for determining the conformation of the 16S rRNA at the A site. The polypeptide is Small ribosomal subunit protein uS14 (Parabacteroides distasonis (strain ATCC 8503 / DSM 20701 / CIP 104284 / JCM 5825 / NCTC 11152)).